A 516-amino-acid polypeptide reads, in one-letter code: MPPPGKVPRKENLGLQCEWGSCSFVCSAMEEFCEHVTQHLQQHLQGSGEEEEEEEDLLEEEFSCLWRECGFCSPDNSADLIRHVYFHCYHTKLKQWGLQALQSQADLSPCILDFQSRNLIPDIPDHFLCLWEHCENSFDNPEWFYRHVEAHSQCCEYQVVGKDNNVVLCGWKGCTCTFKDRFKLREHLRSHTQEKVVACPTCGGMFANNTKFLDHIRRQSSLDQQHFQCSHCSKRFATERLLRDHMRNHVNHYKCPLCDMTCPLPSSLRNHMRFRHSEARPFKCDCCDYSCKNLIDLRKHLDTHSKEPAYSCDFENCTFSARSLYSIKSHYRKVHEGDSEPRYRCHVCDKCFTRGNNLTVHLRKKHQFKWPSGHPRFRYKEHEDGYMRLQLVRYESVELTQQLLRQPQEGSGLGASLNESSLQDIILETVPGEPGPQEEAEEEGGGGEGIALPASQGTSSPIIHVVNQTNAQGEREVVYYVLFEAPGEPPPASEPPSGGVMGELQGAAEEPEVQMV.

C2H2-type zinc fingers lie at residues 15 to 39 (LQCE…VTQH), 127 to 151 (FLCL…VEAH), and 167 to 191 (VLCG…LRSH). The C2H2-type 4; degenerate zinc-finger motif lies at 197–219 (VACPTCGGMFANNTKFLDHIRRQ). 5 C2H2-type zinc fingers span residues 227–249 (FQCS…MRNH), 253–276 (YKCP…RFRH), 282–304 (FKCD…LDTH), 310–335 (YSCD…RKVH), and 343–366 (YRCH…RKKH). An interaction with NPAT region spans residues 371 to 516 (PSGHPRFRYK…AAEEPEVQMV (146 aa)). Residues 372 to 405 (SGHPRFRYKEHEDGYMRLQLVRYESVELTQQLLR) form a required for activation of histone H4 transcription and contributes to DNA-binding region. Disordered regions lie at residues 429-456 (TVPG…PASQ) and 486-516 (PGEP…VQMV). The segment covering 436–445 (PQEEAEEEGG) has biased composition (acidic residues).

Binds MBD2 and a histone deacetylase complex. Interacts with NPAT. In terms of processing, ubiquitinated. Ubiquitination may lead to proteasome-mediated degradation.

It is found in the nucleus. Functionally, transcriptional repressor that binds to the consensus sequence 5'-CGGACGTT-3' and to the RB1 promoter. Transcriptional activator that promotes histone H4 gene transcription at the G1/S phase transition in conjunction with NPAT. Also activates transcription of the ATM and PRKDC genes. Autoregulates its expression by associating with its own promoter. This chain is Histone H4 transcription factor (HINFP), found in Bos taurus (Bovine).